The sequence spans 197 residues: Putative peptidyl-prolyl cis-trans isomerase (197 aa).

In terms of domain architecture, PPIase cyclophilin-type spans 14-195 (GEIKVVMHTN…HDVVIESIDV (182 aa)).

It belongs to the cyclophilin-type PPIase family.

It carries out the reaction [protein]-peptidylproline (omega=180) = [protein]-peptidylproline (omega=0). PPIases accelerate the folding of proteins. It catalyzes the cis-trans isomerization of proline imidic peptide bonds in oligopeptides. The sequence is that of Putative peptidyl-prolyl cis-trans isomerase from Staphylococcus aureus (strain bovine RF122 / ET3-1).